The sequence spans 420 residues: Arginine biosynthesis bifunctional protein ArgJ (420 aa).

Residues Thr-167, Lys-193, Thr-204, Glu-284, Asn-415, and Thr-420 each coordinate substrate. Catalysis depends on Thr-204, which acts as the Nucleophile.

Belongs to the ArgJ family. In terms of assembly, heterotetramer of two alpha and two beta chains.

Its subcellular location is the cytoplasm. It catalyses the reaction N(2)-acetyl-L-ornithine + L-glutamate = N-acetyl-L-glutamate + L-ornithine. The enzyme catalyses L-glutamate + acetyl-CoA = N-acetyl-L-glutamate + CoA + H(+). The protein operates within amino-acid biosynthesis; L-arginine biosynthesis; L-ornithine and N-acetyl-L-glutamate from L-glutamate and N(2)-acetyl-L-ornithine (cyclic): step 1/1. It participates in amino-acid biosynthesis; L-arginine biosynthesis; N(2)-acetyl-L-ornithine from L-glutamate: step 1/4. Catalyzes two activities which are involved in the cyclic version of arginine biosynthesis: the synthesis of N-acetylglutamate from glutamate and acetyl-CoA as the acetyl donor, and of ornithine by transacetylation between N(2)-acetylornithine and glutamate. This chain is Arginine biosynthesis bifunctional protein ArgJ, found in Prochlorococcus marinus (strain NATL2A).